Here is a 460-residue protein sequence, read N- to C-terminus: MPRALSIKFDNTYMDLYDELPESKLLYDEEFSYLLDAVRQNGVCVVDFLTLTPKELARLIQRSINEVFRFQQLLVHEYNEKYLEICEKNSISPDNGPECFTTADVAMDELLGGGIFTHGITEIFGESSTGKSQLLMQLALSVQLSEPAGGLGGKCVYITTEGDLPTQRLESMLSSRPAYEKLGITQSNIFTVSCNDLINQEHIINVQLPILLERSKGSIKLVIIDSISHHLRVELQNKSFRESQENKNYLDRMAEKLQILAHDYSLSVVVANQVGDKPLANSPVAHRTYVTDYDYQLGWLVGWKNSTILYRQMNSLLGASSNNDEILSDDEDYMLIERVMSTVNDRNYDFFSKKKPPIIENKTVERNSSSPISRQSKKRKFDYRVPNLGLTWSNHVSTRILLQKSFKASTIIQRGEAHLYKGGDSASFWQVKRTMKVVYSTFAKPGQIAYQITKRGIETA.

125–132 is an ATP binding site; the sequence is GESSTGKS.

This sequence belongs to the RecA family.

The protein resides in the nucleus. Its function is as follows. Participates in the repair of X-ray-induced damage to DNA and in meiosis. It may act in part by stabilizing a repair complex of other RAD genes. The protein is DNA repair protein RAD57 (RAD57) of Saccharomyces cerevisiae (strain ATCC 204508 / S288c) (Baker's yeast).